We begin with the raw amino-acid sequence, 176 residues long: NAD(P)H-quinone oxidoreductase subunit 6, chloroplastic (176 aa).

5 consecutive transmembrane segments (helical) span residues 10 to 30 (FLLV…VLLT), 32 to 52 (PIYS…LYIL), 61 to 81 (AQLL…VMFM), 92 to 112 (LWTV…GLLI), and 152 to 172 (FFLP…GAIT).

It belongs to the complex I subunit 6 family. As to quaternary structure, NDH is composed of at least 16 different subunits, 5 of which are encoded in the nucleus.

The protein resides in the plastid. It is found in the chloroplast thylakoid membrane. It catalyses the reaction a plastoquinone + NADH + (n+1) H(+)(in) = a plastoquinol + NAD(+) + n H(+)(out). The enzyme catalyses a plastoquinone + NADPH + (n+1) H(+)(in) = a plastoquinol + NADP(+) + n H(+)(out). In terms of biological role, NDH shuttles electrons from NAD(P)H:plastoquinone, via FMN and iron-sulfur (Fe-S) centers, to quinones in the photosynthetic chain and possibly in a chloroplast respiratory chain. The immediate electron acceptor for the enzyme in this species is believed to be plastoquinone. Couples the redox reaction to proton translocation, and thus conserves the redox energy in a proton gradient. The protein is NAD(P)H-quinone oxidoreductase subunit 6, chloroplastic (ndhG) of Morus indica (Mulberry).